The chain runs to 261 residues: RING-H2 finger protein ATL58 (261 aa).

A helical transmembrane segment spans residues 25 to 45 (AFIFSVPICFTFIILFLFYLI). Residues 100-142 (CSVCLGDYQPNDKLQQIPVCKHTFHMDCIDLWLTSHTTCPLCR) form an RING-type; atypical zinc finger. Disordered regions lie at residues 149 to 227 (RSRQ…NDGH) and 241 to 261 (MEEDERNNIGTSSACCSCRTG). Residues 194–221 (SGVSSQPESQPVVNHRGVSSQPESQPVN) are compositionally biased toward polar residues.

It belongs to the RING-type zinc finger family. ATL subfamily.

Its subcellular location is the membrane. It catalyses the reaction S-ubiquitinyl-[E2 ubiquitin-conjugating enzyme]-L-cysteine + [acceptor protein]-L-lysine = [E2 ubiquitin-conjugating enzyme]-L-cysteine + N(6)-ubiquitinyl-[acceptor protein]-L-lysine.. Its pathway is protein modification; protein ubiquitination. This is RING-H2 finger protein ATL58 (ATL58) from Arabidopsis thaliana (Mouse-ear cress).